A 387-amino-acid polypeptide reads, in one-letter code: Mitogen-activated protein kinase homolog MMK1 (387 aa).

Residues 55–340 form the Protein kinase domain; the sequence is KPPIMPIGKG…VEDALAHPYL (286 aa). ATP contacts are provided by residues 61–69 and Lys84; that span reads IGKGAYGIV. Residue Asp181 is the Proton acceptor of the active site. Thr213 bears the Phosphothreonine mark. Residues 213-215 carry the TXY motif; that stretch reads TEY. The residue at position 215 (Tyr215) is a Phosphotyrosine.

This sequence belongs to the protein kinase superfamily. CMGC Ser/Thr protein kinase family. MAP kinase subfamily. Requires Mg(2+) as cofactor. Dually phosphorylated on Thr-213 and Tyr-215, which activates the enzyme. Autophosphorylated. In terms of tissue distribution, roots and stems.

The enzyme catalyses L-seryl-[protein] + ATP = O-phospho-L-seryl-[protein] + ADP + H(+). It catalyses the reaction L-threonyl-[protein] + ATP = O-phospho-L-threonyl-[protein] + ADP + H(+). Activated by tyrosine and threonine phosphorylation. May play a role in the mitogenic induction of symbiotic root nodules on Alfalfa by Rhizobium signal molecules. This Medicago sativa (Alfalfa) protein is Mitogen-activated protein kinase homolog MMK1 (MMK1).